The primary structure comprises 238 residues: Probable transcriptional regulatory protein SZO_02930 (238 aa).

This sequence belongs to the TACO1 family. YeeN subfamily.

Its subcellular location is the cytoplasm. This is Probable transcriptional regulatory protein SZO_02930 from Streptococcus equi subsp. zooepidemicus (strain H70).